Here is a 240-residue protein sequence, read N- to C-terminus: Pyridoxine 5'-phosphate synthase (240 aa).

N7 contributes to the 3-amino-2-oxopropyl phosphate binding site. Residue 9 to 10 (DH) coordinates 1-deoxy-D-xylulose 5-phosphate. R18 provides a ligand contact to 3-amino-2-oxopropyl phosphate. The Proton acceptor role is filled by H43. Residues R45 and H50 each coordinate 1-deoxy-D-xylulose 5-phosphate. Catalysis depends on E70, which acts as the Proton acceptor. Residue T100 participates in 1-deoxy-D-xylulose 5-phosphate binding. H191 (proton donor) is an active-site residue. 3-amino-2-oxopropyl phosphate contacts are provided by residues G192 and 213–214 (GH).

Belongs to the PNP synthase family. As to quaternary structure, homooctamer; tetramer of dimers.

Its subcellular location is the cytoplasm. The catalysed reaction is 3-amino-2-oxopropyl phosphate + 1-deoxy-D-xylulose 5-phosphate = pyridoxine 5'-phosphate + phosphate + 2 H2O + H(+). The protein operates within cofactor biosynthesis; pyridoxine 5'-phosphate biosynthesis; pyridoxine 5'-phosphate from D-erythrose 4-phosphate: step 5/5. Functionally, catalyzes the complicated ring closure reaction between the two acyclic compounds 1-deoxy-D-xylulose-5-phosphate (DXP) and 3-amino-2-oxopropyl phosphate (1-amino-acetone-3-phosphate or AAP) to form pyridoxine 5'-phosphate (PNP) and inorganic phosphate. This chain is Pyridoxine 5'-phosphate synthase, found in Synechococcus elongatus (strain ATCC 33912 / PCC 7942 / FACHB-805) (Anacystis nidulans R2).